A 369-amino-acid polypeptide reads, in one-letter code: Putative 2-aminoethylphosphonate import ATP-binding protein PhnT (369 aa).

Residues 19-250 enclose the ABC transporter domain; that stretch reads IVLDSLRVAY…PPNRFASEFL (232 aa). 51-58 is an ATP binding site; it reads GPSGSGKT.

Belongs to the ABC transporter superfamily. 2-aminoethylphosphonate importer (TC 3.A.1.11.5) family.

Its subcellular location is the cell inner membrane. Probably part of the PhnSTUV complex (TC 3.A.1.11.5) involved in 2-aminoethylphosphonate import. Probably responsible for energy coupling to the transport system. In Salmonella choleraesuis (strain SC-B67), this protein is Putative 2-aminoethylphosphonate import ATP-binding protein PhnT (phnT).